The following is a 360-amino-acid chain: MTVYNFNAGPAILPPSVLSQAQEELRDFAGTGISVMETSHRAKEFEAVNNEVEARFKALLGIESGYRVLLLQGGASTQFAMIPMNFLGADQVADYIITGTWAEKARDEAQKIGKVHIAATTEAENHNRIPSQTELQFSENPVYVHLTTNNTIYGTQWQSTPETNGVPIVADMSSDIFSRPFDASKFGLVYAGAQKNLGPSGVTVVLIREDWLDKGAKNVPTMLRYSTHAKNNSLYNTPPTFGVYMLNLVLAWIQEQGGLAGMAEYNTRKANVVYNAIDNSGGFYRGHAVADSRSQMNVTFNLPTQELEKQFLAEAKAQGMIGLPGHRSVGGVRASIYNAMSIEGVEALASFMAHFAAKQG.

Residue R41 participates in L-glutamate binding. Pyridoxal 5'-phosphate is bound by residues 75-76, W101, T151, D171, and Q194; that span reads AS. K195 carries the N6-(pyridoxal phosphate)lysine modification. 236–237 lines the pyridoxal 5'-phosphate pocket; that stretch reads NT.

It belongs to the class-V pyridoxal-phosphate-dependent aminotransferase family. SerC subfamily. As to quaternary structure, homodimer. Pyridoxal 5'-phosphate serves as cofactor.

The protein localises to the cytoplasm. It catalyses the reaction O-phospho-L-serine + 2-oxoglutarate = 3-phosphooxypyruvate + L-glutamate. It carries out the reaction 4-(phosphooxy)-L-threonine + 2-oxoglutarate = (R)-3-hydroxy-2-oxo-4-phosphooxybutanoate + L-glutamate. It functions in the pathway amino-acid biosynthesis; L-serine biosynthesis; L-serine from 3-phospho-D-glycerate: step 2/3. It participates in cofactor biosynthesis; pyridoxine 5'-phosphate biosynthesis; pyridoxine 5'-phosphate from D-erythrose 4-phosphate: step 3/5. Functionally, catalyzes the reversible conversion of 3-phosphohydroxypyruvate to phosphoserine and of 3-hydroxy-2-oxo-4-phosphonooxybutanoate to phosphohydroxythreonine. The chain is Phosphoserine aminotransferase from Herpetosiphon aurantiacus (strain ATCC 23779 / DSM 785 / 114-95).